Here is a 325-residue protein sequence, read N- to C-terminus: Protease HtpX homolog 2 (325 aa).

2 helical membrane passes run 17 to 37 (IAIL…FFGF) and 42 to 62 (LLIT…WLFG). H146 serves as a coordination point for Zn(2+). E147 is an active-site residue. Zn(2+) is bound at residue H150. 2 helical membrane-spanning segments follow: residues 158-178 (LLLA…GLWW) and 195-215 (ILFL…LFVL). Position 222 (E222) interacts with Zn(2+).

The protein belongs to the peptidase M48B family. Zn(2+) serves as cofactor.

It localises to the cell membrane. The polypeptide is Protease HtpX homolog 2 (Sulfurisphaera tokodaii (strain DSM 16993 / JCM 10545 / NBRC 100140 / 7) (Sulfolobus tokodaii)).